Reading from the N-terminus, the 228-residue chain is Chaperone protein FanE (228 aa).

The first 19 residues, 1 to 19, serve as a signal peptide directing secretion; sequence MNKFISIIALCVFSSYANA. A disulfide bond links C157 and C198.

It belongs to the periplasmic pilus chaperone family.

Its subcellular location is the periplasm. Mediates assembly of pili by forming soluble multimeric complexes with pili subunits as an intermediate step in the assembly process. This protein is involved in K99 pili assembly. In Escherichia coli, this protein is Chaperone protein FanE (fanE).